The following is a 109-amino-acid chain: MNTIIPLLLLSLLITVYAYALEDGNKEEMQDIAESEFEASNEMLQLAHLLEADRAETEEDRNSRQKRCWGANVPCEDENSPCCPPLKCEKTFGYGWWYGSPFCVRSGSG.

The N-terminal stretch at 1–18 (MNTIIPLLLLSLLITVYA) is a signal peptide. Residues 19–67 (YALEDGNKEEMQDIAESEFEASNEMLQLAHLLEADRAETEEDRNSRQKR) constitute a propeptide that is removed on maturation. Cystine bridges form between Cys68/Cys83, Cys75/Cys88, and Cys82/Cys103.

Belongs to the neurotoxin 14 (magi-1) family. 07 (Jztx-56) subfamily. As to expression, expressed by the venom gland.

It localises to the secreted. Its function is as follows. Probable ion channel inhibitor. This is U26-theraphotoxin-Cg1b from Chilobrachys guangxiensis (Chinese earth tiger tarantula).